Reading from the N-terminus, the 626-residue chain is Two-component response regulator ORR24 (626 aa).

A disordered region spans residues 1–22 (MTVEERQGRVGGHGVSGGGGGR). The segment covering 9–22 (RVGGHGVSGGGGGR) has biased composition (gly residues). The region spanning 30 to 145 (RVLAVDDDPT…QLRTIWQHVI (116 aa)) is the Response regulatory domain. D81 is subject to 4-aspartylphosphate. Positions 151-162 (DAKNRGNDDDAG) are enriched in basic and acidic residues. Disordered regions lie at residues 151–215 (DAKN…KKPR) and 402–440 (PLESSNQQHLSRVHSSSADPFSTLVGESPQFPDLGRTTN). Acidic residues predominate over residues 191 to 202 (NGDDGDDSDENS). Positions 210–269 (TQKKPRVVWSVELHRKFVAAVNQLGIEKAVPKKILDLMNVENITRENVASHLQKYRLYLK) form a DNA-binding region, myb-like GARP. A compositionally biased stretch (polar residues) spans 402–421 (PLESSNQQHLSRVHSSSADP).

It belongs to the ARR family. Type-B subfamily. In terms of processing, two-component system major event consists of a His-to-Asp phosphorelay between a sensor histidine kinase (HK) and a response regulator (RR). In plants, the His-to-Asp phosphorelay involves an additional intermediate named Histidine-containing phosphotransfer protein (HPt). This multistep phosphorelay consists of a His-Asp-His-Asp sequential transfer of a phosphate group between first a His and an Asp of the HK protein, followed by the transfer to a conserved His of the HPt protein and finally the transfer to an Asp in the receiver domain of the RR protein.

It localises to the nucleus. In terms of biological role, transcriptional activator that binds specific DNA sequence. Functions as a response regulator involved in His-to-Asp phosphorelay signal transduction system. Phosphorylation of the Asp residue in the receiver domain activates the ability of the protein to promote the transcription of target genes. May directly activate some type-A response regulators in response to cytokinins. The chain is Two-component response regulator ORR24 from Oryza sativa subsp. japonica (Rice).